The sequence spans 194 residues: Glycerol-3-phosphate acyltransferase 2 (194 aa).

5 consecutive transmembrane segments (helical) span residues 1 to 21 (MWLLALVVAYLIGSIPTAYVV), 64 to 84 (VLAVLLGQALGGPVLVILAAL), 112 to 132 (LAMAPLALFWAFLIWLAVVIF), 135 to 155 (YISLGSIVAAAVAPFLVIYFH), and 156 to 173 (RPWPYVLFTFVAAALVIY).

This sequence belongs to the PlsY family. Probably interacts with PlsX.

The protein localises to the cell membrane. It catalyses the reaction an acyl phosphate + sn-glycerol 3-phosphate = a 1-acyl-sn-glycero-3-phosphate + phosphate. Its pathway is lipid metabolism; phospholipid metabolism. Functionally, catalyzes the transfer of an acyl group from acyl-phosphate (acyl-PO(4)) to glycerol-3-phosphate (G3P) to form lysophosphatidic acid (LPA). This enzyme utilizes acyl-phosphate as fatty acyl donor, but not acyl-CoA or acyl-ACP. This Moorella thermoacetica (strain ATCC 39073 / JCM 9320) protein is Glycerol-3-phosphate acyltransferase 2.